The sequence spans 293 residues: Calcium uniporter protein 2, mitochondrial (293 aa).

The transit peptide at 1 to 33 (MWSVMGLVRRTAMSSTVNKASPVRSLLGGFRCL) directs the protein to the mitochondrion. The chain crosses the membrane as a helical span at residues 168-188 (ILWGGLGYSVVQIGIFVRLTF). Residues 193-201 (WDVMEPITF) carry the Selectivity filter motif. Glu197 contributes to the Ca(2+) binding site. A helical transmembrane segment spans residues 198–218 (PITFFTTATGIIVGYAYFLMT).

It belongs to the MCU (TC 1.A.77) family.

It is found in the mitochondrion inner membrane. It catalyses the reaction Ca(2+)(in) = Ca(2+)(out). Mitochondrial inner membrane calcium uniporter that mediates calcium uptake into mitochondria. Constitutes a pore-forming and calcium-conducting subunit. Mitochondrial calcium homeostasis plays key roles in cellular physiology and regulates cell bioenergetics, cytoplasmic calcium signals and activation of cell death pathways. In Arabidopsis thaliana (Mouse-ear cress), this protein is Calcium uniporter protein 2, mitochondrial.